The sequence spans 37 residues: Cytochrome b6-f complex subunit 5 (37 aa).

Residues Leu5 to Ala25 traverse the membrane as a helical segment.

The protein belongs to the PetG family. The 4 large subunits of the cytochrome b6-f complex are cytochrome b6, subunit IV (17 kDa polypeptide, PetD), cytochrome f and the Rieske protein, while the 4 small subunits are PetG, PetL, PetM and PetN. The complex functions as a dimer.

Its subcellular location is the plastid. It localises to the chloroplast thylakoid membrane. In terms of biological role, component of the cytochrome b6-f complex, which mediates electron transfer between photosystem II (PSII) and photosystem I (PSI), cyclic electron flow around PSI, and state transitions. PetG is required for either the stability or assembly of the cytochrome b6-f complex. The chain is Cytochrome b6-f complex subunit 5 from Trieres chinensis (Marine centric diatom).